Here is a 330-residue protein sequence, read N- to C-terminus: D-alanine--D-alanine ligase (330 aa).

In terms of domain architecture, ATP-grasp spans 120–326 (KLWLSALDIP…FKQFLEGIIR (207 aa)). 150–205 (AFRNWGAVFVKAASQGSSVGCYKVTDAAKLSEAVNAAFGYSDQVLVEKAVRPRELE) is an ATP binding site. Mg(2+)-binding residues include Asp280, Glu293, and Asn295.

The protein belongs to the D-alanine--D-alanine ligase family. The cofactor is Mg(2+). Requires Mn(2+) as cofactor.

The protein localises to the cytoplasm. The catalysed reaction is 2 D-alanine + ATP = D-alanyl-D-alanine + ADP + phosphate + H(+). It participates in cell wall biogenesis; peptidoglycan biosynthesis. Functionally, cell wall formation. This chain is D-alanine--D-alanine ligase, found in Tolumonas auensis (strain DSM 9187 / NBRC 110442 / TA 4).